The following is a 333-amino-acid chain: uncharacterized protein (333 aa).

This is an uncharacterized protein from Mycolicibacterium smegmatis (Mycobacterium smegmatis).